Reading from the N-terminus, the 432-residue chain is MKNNYKSLVIVGSQWGDEGKGKITDYFSQKADVVVRFAGGDNAGHMIEFNNKRHKVTIIPSGVFNPKVKNIIGNGTVINLKSLVNEIKRLNESNISTDNVFVSDRAHLIFDWHALIDQLQEENRKENKIGTTKRGIGPTYADKAARYGIRICDFQNPNFKEILKENLDYHNQIITKVYNHEPLDFDVIYNESMTNYQFIKNNIIDSGYEVSNLINENKFVLFEGAQGVLLDIDHGTYPFVTSSNCSANNASIGTGIHNKQINKVLGIVKAYNTRVGSGAMVSEIKTELAHKLRERGREYGLNTGRPRRIGWLDLVALKYAIRVGGIDQLFLTLFDVLDTETKIKICTHYKLDGKIIDWFPASDYELKRCEPVYEELDGWNQDITKVTSFEELPINAQKYIKRIEEIVKVPFLGFSVGSDRKQTILIKGEFDD.

Residues 16–22 (GDEGKGK) and 44–46 (GHM) each bind GTP. Catalysis depends on aspartate 17, which acts as the Proton acceptor. Mg(2+) is bound by residues aspartate 17 and glycine 44. IMP contacts are provided by residues 17 to 20 (DEGK), 42 to 45 (NAGH), threonine 132, arginine 146, glutamine 226, threonine 241, and arginine 305. Histidine 45 functions as the Proton donor in the catalytic mechanism. Residue 301–307 (LNTGRPR) coordinates substrate. GTP contacts are provided by residues arginine 307, 333-335 (LFD), and 415-417 (SVG).

The protein belongs to the adenylosuccinate synthetase family. In terms of assembly, homodimer. Mg(2+) serves as cofactor.

Its subcellular location is the cytoplasm. The catalysed reaction is IMP + L-aspartate + GTP = N(6)-(1,2-dicarboxyethyl)-AMP + GDP + phosphate + 2 H(+). The protein operates within purine metabolism; AMP biosynthesis via de novo pathway; AMP from IMP: step 1/2. Plays an important role in the de novo pathway of purine nucleotide biosynthesis. Catalyzes the first committed step in the biosynthesis of AMP from IMP. In Mycoplasma mycoides subsp. mycoides SC (strain CCUG 32753 / NCTC 10114 / PG1), this protein is Adenylosuccinate synthetase.